Consider the following 62-residue polypeptide: ARTTAGSYRRYRRRCCSPRRLYRLRRRRYRSSRRRRRRPCRRRRHRRVCRRVRRRRRCCRRR.

It belongs to the protamine P2 family. In terms of processing, proteolytic processing into mature chains is required for histone eviction during spermatogenesis. Transition proteins (TNP1 and TNP2) are required for processing. As to expression, testis.

Its subcellular location is the nucleus. It localises to the chromosome. Functionally, protamines substitute for histones in the chromatin of sperm during the haploid phase of spermatogenesis. They compact sperm DNA into a highly condensed, stable and inactive complex. The protein is Sperm histone P2a of Equus caballus (Horse).